A 425-amino-acid chain; its full sequence is Dual-specificity RNA methyltransferase RlmN (425 aa).

Glu136 serves as the catalytic Proton acceptor. Residues 142 to 381 enclose the Radical SAM core domain; sequence GDDRGTLCVS…FTAGYASPVR (240 aa). Cys149 and Cys392 are disulfide-bonded. [4Fe-4S] cluster is bound by residues Cys156, Cys160, and Cys163. S-adenosyl-L-methionine-binding positions include 218-219, Ser250, 272-274, and Asn349; these read GE and SLH. Cys392 functions as the S-methylcysteine intermediate in the catalytic mechanism.

Belongs to the radical SAM superfamily. RlmN family. The cofactor is [4Fe-4S] cluster.

It localises to the cytoplasm. The catalysed reaction is adenosine(2503) in 23S rRNA + 2 reduced [2Fe-2S]-[ferredoxin] + 2 S-adenosyl-L-methionine = 2-methyladenosine(2503) in 23S rRNA + 5'-deoxyadenosine + L-methionine + 2 oxidized [2Fe-2S]-[ferredoxin] + S-adenosyl-L-homocysteine. The enzyme catalyses adenosine(37) in tRNA + 2 reduced [2Fe-2S]-[ferredoxin] + 2 S-adenosyl-L-methionine = 2-methyladenosine(37) in tRNA + 5'-deoxyadenosine + L-methionine + 2 oxidized [2Fe-2S]-[ferredoxin] + S-adenosyl-L-homocysteine. Functionally, specifically methylates position 2 of adenine 2503 in 23S rRNA and position 2 of adenine 37 in tRNAs. m2A2503 modification seems to play a crucial role in the proofreading step occurring at the peptidyl transferase center and thus would serve to optimize ribosomal fidelity. In Methylorubrum extorquens (strain PA1) (Methylobacterium extorquens), this protein is Dual-specificity RNA methyltransferase RlmN.